We begin with the raw amino-acid sequence, 99 residues long: Large ribosomal subunit protein uL23 (99 aa).

Belongs to the universal ribosomal protein uL23 family. Part of the 50S ribosomal subunit. Contacts protein L29, and trigger factor when it is bound to the ribosome.

Its function is as follows. One of the early assembly proteins it binds 23S rRNA. One of the proteins that surrounds the polypeptide exit tunnel on the outside of the ribosome. Forms the main docking site for trigger factor binding to the ribosome. The sequence is that of Large ribosomal subunit protein uL23 from Francisella philomiragia subsp. philomiragia (strain ATCC 25017 / CCUG 19701 / FSC 153 / O#319-036).